The sequence spans 373 residues: GDP-mannose 4,6-dehydratase (373 aa).

NADP(+) is bound by residues 9–14 (GVTGQD), 64–65 (DL), 86–90 (LGAMS), and Tyr-101. Residue Thr-133 is part of the active site. Active-site nucleophile residues include Glu-135 and Tyr-157. The NADP(+) site is built by Lys-161, His-187, and Arg-192.

Belongs to the NAD(P)-dependent epimerase/dehydratase family. GDP-mannose 4,6-dehydratase subfamily. The cofactor is NADP(+).

The enzyme catalyses GDP-alpha-D-mannose = GDP-4-dehydro-alpha-D-rhamnose + H2O. The protein operates within nucleotide-sugar biosynthesis; GDP-L-fucose biosynthesis via de novo pathway; GDP-L-fucose from GDP-alpha-D-mannose: step 1/2. Its function is as follows. Catalyzes the conversion of GDP-D-mannose to GDP-4-dehydro-6-deoxy-D-mannose. This chain is GDP-mannose 4,6-dehydratase, found in Escherichia coli O157:H7.